Here is a 309-residue protein sequence, read N- to C-terminus: Ecto-ADP-ribosyltransferase 5 (309 aa).

The N-terminal stretch at 1–23 (MILEDLLMVLSCLSLHALWKVRA) is a signal peptide. A disulfide bond links Cys-43 and Cys-259. Positions 63-253 (ALLRESWEAA…IVTLWSYDQT (191 aa)) constitute a TR mART core domain. Tyr-100 serves as a coordination point for NAD(+). Asn-102 is a glycosylation site (N-linked (GlcNAc...) asparagine). NAD(+) contacts are provided by Arg-161 and Gln-181. Residue Arg-161 is part of the active site. Residue Ser-184 is part of the active site. An N-linked (GlcNAc...) asparagine glycan is attached at Asn-197. Ser-215 serves as a coordination point for NAD(+). Glu-222 is an active-site residue.

The protein belongs to the Arg-specific ADP-ribosyltransferase family. In terms of tissue distribution, abundantly expressed in testis. Lower levels in cardiac and skeletal muscle.

It localises to the secreted. Its subcellular location is the membrane. The enzyme catalyses L-arginyl-[protein] + NAD(+) = N(omega)-(ADP-D-ribosyl)-L-arginyl-[protein] + nicotinamide + H(+). This chain is Ecto-ADP-ribosyltransferase 5 (Art5), found in Mus musculus (Mouse).